Reading from the N-terminus, the 334-residue chain is Eukaryotic translation initiation factor 3 subunit H (334 aa).

In terms of domain architecture, MPN spans 20–152 (VQCDGLAAMK…LKAYRLTPQA (133 aa)).

Belongs to the eIF-3 subunit H family. Component of the eukaryotic translation initiation factor 3 (eIF-3) complex.

The protein localises to the cytoplasm. Its function is as follows. Component of the eukaryotic translation initiation factor 3 (eIF-3) complex, which is involved in protein synthesis of a specialized repertoire of mRNAs and, together with other initiation factors, stimulates binding of mRNA and methionyl-tRNAi to the 40S ribosome. The eIF-3 complex specifically targets and initiates translation of a subset of mRNAs involved in cell proliferation. In Anopheles gambiae (African malaria mosquito), this protein is Eukaryotic translation initiation factor 3 subunit H.